Consider the following 350-residue polypeptide: Heat-inducible transcription repressor HrcA (350 aa).

Belongs to the HrcA family.

Its function is as follows. Negative regulator of class I heat shock genes (grpE-dnaK-dnaJ and groELS operons). Prevents heat-shock induction of these operons. This Ligilactobacillus salivarius (strain UCC118) (Lactobacillus salivarius) protein is Heat-inducible transcription repressor HrcA.